The chain runs to 340 residues: Dihydroorotate dehydrogenase (quinone) (340 aa).

FMN-binding positions include 62–66 (AGLDK) and Thr86. Lys66 lines the substrate pocket. Residue 111–115 (NRMGF) participates in substrate binding. FMN contacts are provided by Asn139 and Asn172. Position 172 (Asn172) interacts with substrate. Ser175 functions as the Nucleophile in the catalytic mechanism. Asn177 contributes to the substrate binding site. The FMN site is built by Lys217 and Thr245. 246-247 (NT) contacts substrate. FMN contacts are provided by residues Gly268, Gly297, and 318–319 (YS).

This sequence belongs to the dihydroorotate dehydrogenase family. Type 2 subfamily. Monomer. Requires FMN as cofactor.

The protein localises to the cell membrane. The catalysed reaction is (S)-dihydroorotate + a quinone = orotate + a quinol. Its pathway is pyrimidine metabolism; UMP biosynthesis via de novo pathway; orotate from (S)-dihydroorotate (quinone route): step 1/1. Functionally, catalyzes the conversion of dihydroorotate to orotate with quinone as electron acceptor. This is Dihydroorotate dehydrogenase (quinone) from Alkalilimnicola ehrlichii (strain ATCC BAA-1101 / DSM 17681 / MLHE-1).